The primary structure comprises 331 residues: Ornithine carbamoyltransferase, catabolic (331 aa).

Residues 57 to 60, Gln82, Arg106, and 133 to 136 each bind carbamoyl phosphate; these read STRT and HPTQ. L-ornithine is bound by residues Asn166, Asp230, and 234-235; that span reads SM. Residues 272-273 and Arg317 each bind carbamoyl phosphate; that span reads CL.

It belongs to the aspartate/ornithine carbamoyltransferase superfamily. OTCase family.

It localises to the cytoplasm. It carries out the reaction carbamoyl phosphate + L-ornithine = L-citrulline + phosphate + H(+). It functions in the pathway amino-acid degradation; L-arginine degradation via ADI pathway; carbamoyl phosphate from L-arginine: step 2/2. Reversibly catalyzes the transfer of the carbamoyl group from carbamoyl phosphate (CP) to the N(epsilon) atom of ornithine (ORN) to produce L-citrulline. The protein is Ornithine carbamoyltransferase, catabolic (arcB) of Clostridium perfringens (strain ATCC 13124 / DSM 756 / JCM 1290 / NCIMB 6125 / NCTC 8237 / Type A).